The sequence spans 406 residues: Succinylornithine transaminase (406 aa).

N6-(pyridoxal phosphate)lysine is present on Lys-252.

Belongs to the class-III pyridoxal-phosphate-dependent aminotransferase family. AstC subfamily. Requires pyridoxal 5'-phosphate as cofactor.

The enzyme catalyses N(2)-succinyl-L-ornithine + 2-oxoglutarate = N-succinyl-L-glutamate 5-semialdehyde + L-glutamate. Its pathway is amino-acid degradation; L-arginine degradation via AST pathway; L-glutamate and succinate from L-arginine: step 3/5. Functionally, catalyzes the transamination of N(2)-succinylornithine and alpha-ketoglutarate into N(2)-succinylglutamate semialdehyde and glutamate. Can also act as an acetylornithine aminotransferase. This is Succinylornithine transaminase from Citrobacter koseri (strain ATCC BAA-895 / CDC 4225-83 / SGSC4696).